The primary structure comprises 286 residues: GTP-binding protein 8 (286 aa).

In terms of domain architecture, EngB-type G spans 105-278; it reads KQPEVCFMGR…RCFIAHVTGK (174 aa). GTP-binding positions include 113–120, 142–146, 160–163, 222–225, and 257–259; these read GRSNVGKS, GHTKK, DMPG, TKID, and VSS. Mg(2+)-binding residues include serine 120 and threonine 144.

This sequence belongs to the TRAFAC class TrmE-Era-EngA-EngB-Septin-like GTPase superfamily. EngB GTPase family. The cofactor is Mg(2+).

This chain is GTP-binding protein 8 (gtpbp8), found in Danio rerio (Zebrafish).